Here is a 121-residue protein sequence, read N- to C-terminus: Small ribosomal subunit protein uS13 (121 aa).

Positions 91-121 (HRRGLPTRGQNTKNNARTRKGPVKTVANKKK) are disordered. The segment covering 106 to 121 (ARTRKGPVKTVANKKK) has biased composition (basic residues).

It belongs to the universal ribosomal protein uS13 family. Part of the 30S ribosomal subunit. Forms a loose heterodimer with protein S19. Forms two bridges to the 50S subunit in the 70S ribosome.

Its function is as follows. Located at the top of the head of the 30S subunit, it contacts several helices of the 16S rRNA. In the 70S ribosome it contacts the 23S rRNA (bridge B1a) and protein L5 of the 50S subunit (bridge B1b), connecting the 2 subunits; these bridges are implicated in subunit movement. Contacts the tRNAs in the A and P-sites. The polypeptide is Small ribosomal subunit protein uS13 (Macrococcus caseolyticus (strain JCSC5402) (Macrococcoides caseolyticum)).